A 328-amino-acid polypeptide reads, in one-letter code: UPF0324 membrane protein AF_1621 (328 aa).

11 helical membrane passes run 21-39 (LQML…IINL), 43-60 (ALEP…AGNL), 73-95 (YVPF…PYLG), 101-123 (IVAA…SSRL), 130-152 (SILL…SPLI), 162-184 (AIMI…AHYA), 191-213 (FAVL…QLFG), 223-240 (GIRI…SIIY), 245-267 (FYVP…YLPG), 271-293 (QALR…YTVN), and 305-327 (LFAS…GSGA).

Belongs to the UPF0324 family.

It is found in the cell membrane. The sequence is that of UPF0324 membrane protein AF_1621 from Archaeoglobus fulgidus (strain ATCC 49558 / DSM 4304 / JCM 9628 / NBRC 100126 / VC-16).